The sequence spans 92 residues: Small ribosomal subunit protein bS20 (92 aa).

Residues 1–21 (MPLHKSAEKRLRQAARRNERN) are compositionally biased toward basic and acidic residues. 2 disordered regions span residues 1–26 (MPLH…ARKK) and 73–92 (ASRK…PTAS). Residues 82–92 (KALNNYTPTAS) are compositionally biased toward polar residues.

It belongs to the bacterial ribosomal protein bS20 family.

Binds directly to 16S ribosomal RNA. The chain is Small ribosomal subunit protein bS20 from Chlorobaculum tepidum (strain ATCC 49652 / DSM 12025 / NBRC 103806 / TLS) (Chlorobium tepidum).